The primary structure comprises 364 residues: Phosphate acyltransferase (364 aa).

The disordered stretch occupies residues 343-364 (IRTSGRSGGKSKSSAAREDGAA).

Belongs to the PlsX family. In terms of assembly, homodimer. Probably interacts with PlsY.

It is found in the cytoplasm. The enzyme catalyses a fatty acyl-[ACP] + phosphate = an acyl phosphate + holo-[ACP]. It functions in the pathway lipid metabolism; phospholipid metabolism. Its function is as follows. Catalyzes the reversible formation of acyl-phosphate (acyl-PO(4)) from acyl-[acyl-carrier-protein] (acyl-ACP). This enzyme utilizes acyl-ACP as fatty acyl donor, but not acyl-CoA. This chain is Phosphate acyltransferase, found in Novosphingobium aromaticivorans (strain ATCC 700278 / DSM 12444 / CCUG 56034 / CIP 105152 / NBRC 16084 / F199).